Here is a 414-residue protein sequence, read N- to C-terminus: Cytochrome P450 CYP105Q4 (414 aa).

Residues 1-12 (MSDTLASPSPET) are compositionally biased toward polar residues. A disordered region spans residues 1–21 (MSDTLASPSPETASGIPDYPM). Residues H108, Q302, R304, H361, and C363 each contribute to the heme site.

It belongs to the cytochrome P450 family. Heme is required as a cofactor.

Can bind oleic-acid derivatives, amphotericin B like precursors and a variety of nitrogen ligand donors. This Mycobacterium marinum (strain ATCC BAA-535 / M) protein is Cytochrome P450 CYP105Q4.